The chain runs to 614 residues: Leucine aminopeptidase 2 (614 aa).

A peptide is bound by residues 139 to 141 (QCQ) and 271 to 276 (PYGGME). His-300 lines the Zn(2+) pocket. Catalysis depends on Glu-301, which acts as the Proton acceptor. Residues His-304 and Glu-323 each contribute to the Zn(2+) site. The active-site Proton donor is the Tyr-385.

The protein belongs to the peptidase M1 family. The cofactor is Zn(2+).

It localises to the cytoplasm. Its subcellular location is the nucleus. The enzyme catalyses an epoxide + H2O = an ethanediol. Functionally, aminopeptidase that preferentially cleaves di- and tripeptides. Also has low epoxide hydrolase activity (in vitro). Can hydrolyze the epoxide leukotriene LTA(4) but it forms preferentially 5,6-dihydroxy-7,9,11,14-eicosatetraenoic acid rather than the cytokine leukotriene B(4) as the product compared to the homologous mammalian enzyme (in vitro). The polypeptide is Leucine aminopeptidase 2 (Aspergillus fumigatus (strain ATCC MYA-4609 / CBS 101355 / FGSC A1100 / Af293) (Neosartorya fumigata)).